The chain runs to 246 residues: Mediator of RNA polymerase II transcription subunit 6 (246 aa).

2 disordered regions span residues 165-186 and 207-246; these read MKKK…RSTN and EALE…ATTK. Basic and acidic residues-rich tracts occupy residues 166 to 184 and 208 to 224; these read KKKE…EERS and ALEK…KPEE.

This sequence belongs to the Mediator complex subunit 6 family. Component of the Mediator complex. Interacts with let-19/mdt-13. Interacts with RNA polymerase II. Interacts with mdt-28.

Its subcellular location is the nucleus. Functionally, component of the Mediator complex, a coactivator involved in the regulated transcription of nearly all RNA polymerase II-dependent genes. Mediator functions as a bridge to convey information from gene-specific regulatory proteins to the basal RNA polymerase II transcription machinery. Mediator is recruited to promoters by direct interactions with regulatory proteins and serves as a scaffold for the assembly of a functional preinitiation complex with RNA polymerase II and the general transcription factors. This chain is Mediator of RNA polymerase II transcription subunit 6 (mdt-6), found in Caenorhabditis briggsae.